Here is a 480-residue protein sequence, read N- to C-terminus: Cytochrome b-c1 complex subunit 1, mitochondrial (480 aa).

The N-terminal 34 residues, 1 to 34 (MAASAVCRAAGAGTRVLLRTRRSPALLRSSDLRG), are a transit peptide targeting the mitochondrion. 2 positions are modified to N6-acetyllysine: Lys-111 and Lys-138. An N6-acetyllysine; alternate modification is found at Lys-163. Lys-163 is subject to N6-succinyllysine; alternate. At Ser-212 the chain carries Phosphoserine. Lys-248 carries the N6-acetyllysine modification.

It belongs to the peptidase M16 family. UQCRC1/QCR1 subfamily. As to quaternary structure, component of the ubiquinol-cytochrome c oxidoreductase (cytochrome b-c1 complex, complex III, CIII), a multisubunit enzyme composed of 11 subunits. The complex is composed of 3 respiratory subunits cytochrome b, cytochrome c1 and Rieske protein UQCRFS1, 2 core protein subunits UQCRC1/QCR1 and UQCRC2/QCR2, and 6 low-molecular weight protein subunits UQCRH/QCR6, UQCRB/QCR7, UQCRQ/QCR8, UQCR10/QCR9, UQCR11/QCR10 and subunit 9, the cleavage product of Rieske protein UQCRFS1. The complex exists as an obligatory dimer and forms supercomplexes (SCs) in the inner mitochondrial membrane with NADH-ubiquinone oxidoreductase (complex I, CI) and cytochrome c oxidase (complex IV, CIV), resulting in different assemblies (supercomplex SCI(1)III(2)IV(1) and megacomplex MCI(2)III(2)IV(2)). Interacts with UQCC6. Interacts with STMP1.

The protein resides in the mitochondrion inner membrane. In terms of biological role, component of the ubiquinol-cytochrome c oxidoreductase, a multisubunit transmembrane complex that is part of the mitochondrial electron transport chain which drives oxidative phosphorylation. The respiratory chain contains 3 multisubunit complexes succinate dehydrogenase (complex II, CII), ubiquinol-cytochrome c oxidoreductase (cytochrome b-c1 complex, complex III, CIII) and cytochrome c oxidase (complex IV, CIV), that cooperate to transfer electrons derived from NADH and succinate to molecular oxygen, creating an electrochemical gradient over the inner membrane that drives transmembrane transport and the ATP synthase. The cytochrome b-c1 complex catalyzes electron transfer from ubiquinol to cytochrome c, linking this redox reaction to translocation of protons across the mitochondrial inner membrane, with protons being carried across the membrane as hydrogens on the quinol. In the process called Q cycle, 2 protons are consumed from the matrix, 4 protons are released into the intermembrane space and 2 electrons are passed to cytochrome c. The 2 core subunits UQCRC1/QCR1 and UQCRC2/QCR2 are homologous to the 2 mitochondrial-processing peptidase (MPP) subunits beta-MPP and alpha-MPP respectively, and they seem to have preserved their MPP processing properties. May be involved in the in situ processing of UQCRFS1 into the mature Rieske protein and its mitochondrial targeting sequence (MTS)/subunit 9 when incorporated into complex III. Seems to play an important role in the maintenance of proper mitochondrial function in nigral dopaminergic neurons. The sequence is that of Cytochrome b-c1 complex subunit 1, mitochondrial (UQCRC1) from Bos taurus (Bovine).